Here is a 350-residue protein sequence, read N- to C-terminus: Nicotinate-nucleotide--dimethylbenzimidazole phosphoribosyltransferase (350 aa).

Glutamate 317 acts as the Proton acceptor in catalysis.

Belongs to the CobT family.

It catalyses the reaction 5,6-dimethylbenzimidazole + nicotinate beta-D-ribonucleotide = alpha-ribazole 5'-phosphate + nicotinate + H(+). The protein operates within nucleoside biosynthesis; alpha-ribazole biosynthesis; alpha-ribazole from 5,6-dimethylbenzimidazole: step 1/2. Its function is as follows. Catalyzes the synthesis of alpha-ribazole-5'-phosphate from nicotinate mononucleotide (NAMN) and 5,6-dimethylbenzimidazole (DMB). This Shewanella sp. (strain MR-4) protein is Nicotinate-nucleotide--dimethylbenzimidazole phosphoribosyltransferase.